We begin with the raw amino-acid sequence, 250 residues long: 6-phosphogluconate dehydrogenase, decarboxylating (250 aa).

Substrate contacts are provided by Lys29 and Arg56. Lys77 is modified (N6-acetyllysine). Residues Arg214 and His220 each coordinate substrate. 245-248 (SSSY) serves as a coordination point for NADP(+).

This sequence belongs to the 6-phosphogluconate dehydrogenase family. Homodimer.

The protein resides in the cytoplasm. It catalyses the reaction 6-phospho-D-gluconate + NADP(+) = D-ribulose 5-phosphate + CO2 + NADPH. It functions in the pathway carbohydrate degradation; pentose phosphate pathway; D-ribulose 5-phosphate from D-glucose 6-phosphate (oxidative stage): step 3/3. Its function is as follows. Catalyzes the oxidative decarboxylation of 6-phosphogluconate to ribulose 5-phosphate and CO(2), with concomitant reduction of NADP to NADPH. The polypeptide is 6-phosphogluconate dehydrogenase, decarboxylating (PGD) (Sus scrofa (Pig)).